A 297-amino-acid polypeptide reads, in one-letter code: Formylmethanofuran--tetrahydromethanopterin formyltransferase (297 aa).

Belongs to the FTR family. In terms of assembly, homotetramer.

It is found in the cytoplasm. It carries out the reaction N-formylmethanofuran + 5,6,7,8-tetrahydromethanopterin + H(+) = N(5)-formyl-5,6,7,8-tetrahydromethanopterin + methanofuran. It functions in the pathway one-carbon metabolism; methanogenesis from CO(2); 5,10-methenyl-5,6,7,8-tetrahydromethanopterin from CO(2): step 2/3. Catalyzes the reversible transfer of a formyl group from formylmethanofuran (formyl-MFR) to tetrahydromethanopterin (H(4)MPT) to produce 5-formyl tetrahydromethanopterin (5-formyl-H(4)MPT) and methanofuran (MFR). The chain is Formylmethanofuran--tetrahydromethanopterin formyltransferase from Methanosarcina mazei (strain ATCC BAA-159 / DSM 3647 / Goe1 / Go1 / JCM 11833 / OCM 88) (Methanosarcina frisia).